Consider the following 307-residue polypeptide: Synaptophysin (307 aa).

At 1–19 (MDVVNQLVAGGQFRVVKEP) the chain is on the cytoplasmic side. The MARVEL domain maps to 15 to 222 (VVKEPLGFVK…NLWFVFKETG (208 aa)). A helical transmembrane segment spans residues 20–43 (LGFVKVLQWVFAIFAFATCGSYTG). Residues 44–101 (ELRLSVECANKTESALNIEVEFEYPFRLHQVYFDAPSCVKGGTTKIFLVGDYSSSAEF) are Vesicular-facing. N-linked (GlcNAc...) asparagine glycosylation is present at Asn-53. Tyr-75 carries the phosphotyrosine modification. A helical transmembrane segment spans residues 102 to 125 (FVTVAVFAFLYSMGALATYIFLQN). At 126–132 (KYRENNK) the chain is on the cytoplasmic side. The chain crosses the membrane as a helical span at residues 133–156 (GPMMDFLATAVFAFMWLVSSSAWA). Over 157-194 (KGLSDVKMATDPENIIKEMPMCRQTGNTCKELRDPVTS) the chain is Vesicular. A helical membrane pass occupies residues 195-218 (GLNTSVVFGFLNLVLWVGNLWFVF). Residues 219 to 307 (KETGWAAPFM…GAPTSFSNQM (89 aa)) are Cytoplasmic-facing. Phosphothreonine is present on Thr-221. The segment at 233-307 (GAPEKQPAPG…GAPTSFSNQM (75 aa)) is disordered. Gly residues predominate over residues 248–258 (AGYGQGPGGYG). Positions 249 to 298 (GYGQGPGGYGPQDSYGPQGGYQPDYGQPASGGGGYGPQGDYGQQGYGQQG) are repeats, Gly-rich. The span at 259–276 (PQDSYGPQGGYQPDYGQP) shows a compositional bias: low complexity. Phosphotyrosine occurs at positions 273 and 289. The segment covering 277-296 (ASGGGGYGPQGDYGQQGYGQ) has biased composition (gly residues).

This sequence belongs to the synaptophysin/synaptobrevin family. In terms of assembly, homohexamer or homotetramer. Interacts with SRCIN1. Interacts with VAMP2; the interaction is inhibited by interaction of VAPM2 with SEPT8. Post-translationally, ubiquitinated; mediated by SIAH1 or SIAH2 and leading to its subsequent proteasomal degradation. Phosphorylated by SRC. In terms of tissue distribution, expressed in the brain with expression in the cerebrum and the cerebellum.

Its subcellular location is the cytoplasmic vesicle. The protein localises to the secretory vesicle. It localises to the synaptic vesicle membrane. It is found in the synapse. The protein resides in the synaptosome. In terms of biological role, possibly involved in structural functions as organizing other membrane components or in targeting the vesicles to the plasma membrane. Involved in the regulation of short-term and long-term synaptic plasticity. This chain is Synaptophysin (Syp), found in Rattus norvegicus (Rat).